A 381-amino-acid polypeptide reads, in one-letter code: Queuine tRNA-ribosyltransferase (381 aa).

The active-site Proton acceptor is the D96. Substrate-binding positions include 96 to 100 (DSGGF), D150, Q193, and G220. Residues 251 to 257 (GVGSPDS) form an RNA binding region. D270 acts as the Nucleophile in catalysis. Positions 275–279 (TRIAR) are RNA binding; important for wobble base 34 recognition. 4 residues coordinate Zn(2+): C308, C310, C313, and H339.

The protein belongs to the queuine tRNA-ribosyltransferase family. In terms of assembly, homodimer. Within each dimer, one monomer is responsible for RNA recognition and catalysis, while the other monomer binds to the replacement base PreQ1. Requires Zn(2+) as cofactor.

The enzyme catalyses 7-aminomethyl-7-carbaguanine + guanosine(34) in tRNA = 7-aminomethyl-7-carbaguanosine(34) in tRNA + guanine. It participates in tRNA modification; tRNA-queuosine biosynthesis. Its function is as follows. Catalyzes the base-exchange of a guanine (G) residue with the queuine precursor 7-aminomethyl-7-deazaguanine (PreQ1) at position 34 (anticodon wobble position) in tRNAs with GU(N) anticodons (tRNA-Asp, -Asn, -His and -Tyr). Catalysis occurs through a double-displacement mechanism. The nucleophile active site attacks the C1' of nucleotide 34 to detach the guanine base from the RNA, forming a covalent enzyme-RNA intermediate. The proton acceptor active site deprotonates the incoming PreQ1, allowing a nucleophilic attack on the C1' of the ribose to form the product. After dissociation, two additional enzymatic reactions on the tRNA convert PreQ1 to queuine (Q), resulting in the hypermodified nucleoside queuosine (7-(((4,5-cis-dihydroxy-2-cyclopenten-1-yl)amino)methyl)-7-deazaguanosine). The polypeptide is Queuine tRNA-ribosyltransferase (Bacillus pumilus (strain SAFR-032)).